A 310-amino-acid chain; its full sequence is Putative S-adenosyl-L-methionine-dependent methyltransferase MAB_4587c (310 aa).

Residues aspartate 126 and 155-156 contribute to the S-adenosyl-L-methionine site; that span reads DL.

This sequence belongs to the UPF0677 family.

Its function is as follows. Exhibits S-adenosyl-L-methionine-dependent methyltransferase activity. The protein is Putative S-adenosyl-L-methionine-dependent methyltransferase MAB_4587c of Mycobacteroides abscessus (strain ATCC 19977 / DSM 44196 / CCUG 20993 / CIP 104536 / JCM 13569 / NCTC 13031 / TMC 1543 / L948) (Mycobacterium abscessus).